A 429-amino-acid polypeptide reads, in one-letter code: 3-oxo-tetronate kinase (429 aa).

Residues Ser268, 366–369, and Gly410 each bind ATP; that span reads GGET.

The protein belongs to the four-carbon acid sugar kinase family.

The enzyme catalyses 3-dehydro-L-erythronate + ATP = 3-dehydro-4-O-phospho-L-erythronate + ADP + H(+). It catalyses the reaction 3-dehydro-D-erythronate + ATP = 3-dehydro-4-O-phospho-D-erythronate + ADP + H(+). In terms of biological role, catalyzes the ATP-dependent phosphorylation of 3-oxo-tetronate to 3-oxo-tetronate 4-phosphate. The sequence is that of 3-oxo-tetronate kinase from Pseudomonas savastanoi pv. phaseolicola (strain 1448A / Race 6) (Pseudomonas syringae pv. phaseolicola (strain 1448A / Race 6)).